A 250-amino-acid chain; its full sequence is Kv channel-interacting protein 4 (250 aa).

Residues 2-44 (NVRRVESISAQLEEASSTGGFLYAQNSTKRSIKERLMKLLPCS) form a KIS region. A phosphoserine mark is found at Ser17 and Ser56. The 57-residue stretch at 61–117 (LEMATVRHRPEALELLEAQSKFTKKELQILYRGFKNECPSGVVNEETFKEIYSQFFP) folds into the EF-hand 1; degenerate domain. EF-hand domains are found at residues 120 to 155 (DSTT…LLRG), 156 to 191 (TVQE…IYDM), and 204 to 239 (APRQ…DENI). Asp133, Asp135, Asn137, Asp144, Asp169, Asn171, Asp173, Tyr175, Glu180, Asp217, Asn219, Asp221, and Glu228 together coordinate Ca(2+). Positions 237-250 (ENIMRSMQLFENVI) are interaction with KCND2.

It belongs to the recoverin family. In terms of assembly, component of heteromultimeric potassium channels. Identified in potassium channel complexes containing KCND1, KCND2, KCND3, KCNIP1, KCNIP2, KCNIP3, KCNIP4, DPP6 and DPP10. Interacts with KCND2. Interacts with KCND3. Interacts with the C-terminus of PSEN2 and probably PSEN1.

The protein localises to the cell membrane. It is found in the cytoplasm. Its subcellular location is the peroxisome. Its function is as follows. Regulatory subunit of Kv4/D (Shal)-type voltage-gated rapidly inactivating A-type potassium channels. Modulates KCND2 channel density, inactivation kinetics and rate of recovery from inactivation in a calcium-dependent and isoform-specific manner. Modulates KCND3/Kv4.3 currents. Isoform 4 does not increase KCND2 expression at the cell membrane. Isoform 4 retains KCND3 in the endoplasmic reticulum and negatively regulates its expression at the cell membrane. The sequence is that of Kv channel-interacting protein 4 (KCNIP4) from Macaca fascicularis (Crab-eating macaque).